The following is a 248-amino-acid chain: 1-(5-phosphoribosyl)-5-[(5-phosphoribosylamino)methylideneamino] imidazole-4-carboxamide isomerase (248 aa).

Asp7 (proton acceptor) is an active-site residue. Catalysis depends on Asp131, which acts as the Proton donor.

This sequence belongs to the HisA/HisF family.

The protein resides in the cytoplasm. The catalysed reaction is 1-(5-phospho-beta-D-ribosyl)-5-[(5-phospho-beta-D-ribosylamino)methylideneamino]imidazole-4-carboxamide = 5-[(5-phospho-1-deoxy-D-ribulos-1-ylimino)methylamino]-1-(5-phospho-beta-D-ribosyl)imidazole-4-carboxamide. Its pathway is amino-acid biosynthesis; L-histidine biosynthesis; L-histidine from 5-phospho-alpha-D-ribose 1-diphosphate: step 4/9. The protein is 1-(5-phosphoribosyl)-5-[(5-phosphoribosylamino)methylideneamino] imidazole-4-carboxamide isomerase of Baumannia cicadellinicola subsp. Homalodisca coagulata.